The primary structure comprises 118 residues: Myotrophin (118 aa).

ANK repeat units lie at residues 1–30 (MGDK…DVNR), 34–65 (GGRK…NAAD), and 67–98 (HGIT…NVKG).

It belongs to the myotrophin family.

The protein resides in the cytoplasm. Its subcellular location is the nucleus. The protein localises to the perinuclear region. Its function is as follows. Regulates NF-kappa-B transcription factor activity. Promotes growth of cardiomyocytes, but not cardiomyocyte proliferation. Promotes cardiac muscle hypertrophy. Plays a role in the regulation of the growth of actin filaments. Inhibits the activity of the F-actin-capping protein complex. This is Myotrophin (mtpn) from Xenopus laevis (African clawed frog).